Here is a 216-residue protein sequence, read N- to C-terminus: GTP cyclohydrolase 1 2 (216 aa).

Belongs to the GTP cyclohydrolase I family. In terms of assembly, homomer.

It carries out the reaction GTP + H2O = 7,8-dihydroneopterin 3'-triphosphate + formate + H(+). It participates in cofactor biosynthesis; 7,8-dihydroneopterin triphosphate biosynthesis; 7,8-dihydroneopterin triphosphate from GTP: step 1/1. The sequence is that of GTP cyclohydrolase 1 2 (folE2) from Nostoc sp. (strain PCC 7120 / SAG 25.82 / UTEX 2576).